We begin with the raw amino-acid sequence, 1210 residues long: AF4/FMR2 family member 1 (1210 aa).

4 disordered regions span residues 1 to 45 (MAAQ…GEPY), 73 to 314 (TKSH…KPLP), 366 to 957 (SWPP…KPQV), and 1098 to 1119 (TGTP…SQSS). Composition is skewed to basic and acidic residues over residues 9 to 35 (NDDR…EAFP) and 78 to 87 (HRLDASENRL). Residues S199, S206, and S212 each carry the phosphoserine modification. The span at 215–238 (HSNQQTLPRTQGSSKVHGSSNNSK) shows a compositional bias: polar residues. T220 is modified (phosphothreonine). Positions 245–259 (SPKDLAVKVHDKETP) are enriched in basic and acidic residues. Over residues 267-279 (AQPPSQTFPPPSL) the composition is skewed to pro residues. A compositionally biased stretch (polar residues) spans 394–419 (HVSSVTQNQKQYDTSSKTHSNSQQGT). Over residues 423–439 (LEDDLQLSDSEDSDSEQ) the composition is skewed to acidic residues. Residues 442-453 (EKPPSSSAPPSA) show a composition bias toward pro residues. Positions 454–472 (PQSLPEPVASAHSSSAESE) are enriched in low complexity. Residues 473 to 497 (STSDSDSSSDSESESSSSDSEENEP) show a composition bias toward acidic residues. The span at 536 to 546 (EPPRRHPESKG) shows a compositional bias: basic and acidic residues. Over residues 586–602 (QKSPAQQEPPQRQTVGT) the composition is skewed to polar residues. Residue S588 is modified to Phosphoserine. At K681 the chain carries N6-acetyllysine. Over residues 688–699 (PAKDNVEDRTPE) the composition is skewed to basic and acidic residues. The residue at position 697 (T697) is a Phosphothreonine. The span at 707–724 (TESQGPPHSGSGSRTSGC) shows a compositional bias: polar residues. Positions 732–747 (EDSRKDRLPLPLRDTK) are enriched in basic and acidic residues. S750 bears the Phosphoserine mark. At T755 the chain carries Phosphothreonine. Residues 816–834 (GEAERDCDNKKIRLEKEIK) are compositionally biased toward basic and acidic residues. A compositionally biased stretch (low complexity) spans 871-880 (SSSSQKPAKP). Residues 906 to 932 (NHKDSSIPKQRRVEGKGSRSSSEHKGS) show a composition bias toward basic and acidic residues. A compositionally biased stretch (low complexity) spans 1110-1119 (PASSVGSQSS).

Belongs to the AF4 family. In terms of assembly, component of the super elongation complex (SEC), at least composed of EAF1, EAF2, CDK9, MLLT3/AF9, AFF (AFF1 or AFF4), the P-TEFb complex and ELL (ELL, ELL2 or ELL3).

It is found in the nucleus. The sequence is that of AF4/FMR2 family member 1 (AFF1) from Homo sapiens (Human).